A 394-amino-acid polypeptide reads, in one-letter code: S-adenosylmethionine synthase (394 aa).

His-15 contributes to the ATP binding site. Asp-17 is a Mg(2+) binding site. Glu-43 contacts K(+). Positions 56 and 99 each coordinate L-methionine. The segment at 99–109 (QSPDIALGVNK) is flexible loop. ATP is bound by residues 173 to 175 (DGK), 239 to 240 (RF), Asp-248, 254 to 255 (RK), Ala-271, and Lys-275. Asp-248 contributes to the L-methionine binding site. Lys-279 is an L-methionine binding site.

The protein belongs to the AdoMet synthase family. In terms of assembly, homotetramer; dimer of dimers. Mg(2+) is required as a cofactor. The cofactor is K(+).

The protein localises to the cytoplasm. The enzyme catalyses L-methionine + ATP + H2O = S-adenosyl-L-methionine + phosphate + diphosphate. It participates in amino-acid biosynthesis; S-adenosyl-L-methionine biosynthesis; S-adenosyl-L-methionine from L-methionine: step 1/1. Catalyzes the formation of S-adenosylmethionine (AdoMet) from methionine and ATP. The overall synthetic reaction is composed of two sequential steps, AdoMet formation and the subsequent tripolyphosphate hydrolysis which occurs prior to release of AdoMet from the enzyme. This is S-adenosylmethionine synthase from Kosmotoga olearia (strain ATCC BAA-1733 / DSM 21960 / TBF 19.5.1).